The sequence spans 238 residues: Ribonuclease 3 (238 aa).

Residues 9 to 141 enclose the RNase III domain; that stretch reads LIDFMEKIGY…VVAAVYIDGG (133 aa). Glu54 contacts Mg(2+). Residue Asp58 is part of the active site. Positions 127 and 130 each coordinate Mg(2+). Glu130 is a catalytic residue. Residues 168–237 form the DRBM domain; that stretch reads DYKTSLQEIT…ARRAIEKLKG (70 aa).

Belongs to the ribonuclease III family. As to quaternary structure, homodimer. Mg(2+) is required as a cofactor.

The protein localises to the cytoplasm. It catalyses the reaction Endonucleolytic cleavage to 5'-phosphomonoester.. In terms of biological role, digests double-stranded RNA. Involved in the processing of primary rRNA transcript to yield the immediate precursors to the large and small rRNAs (23S and 16S). Processes some mRNAs, and tRNAs when they are encoded in the rRNA operon. Processes pre-crRNA and tracrRNA of type II CRISPR loci if present in the organism. This is Ribonuclease 3 from Pseudothermotoga lettingae (strain ATCC BAA-301 / DSM 14385 / NBRC 107922 / TMO) (Thermotoga lettingae).